A 152-amino-acid polypeptide reads, in one-letter code: 3-dehydroquinate dehydratase (152 aa).

Catalysis depends on Tyr-23, which acts as the Proton acceptor. Asn-74, His-80, and Asp-87 together coordinate substrate. The Proton donor role is filled by His-100. Residues 101–102 and Arg-111 each bind substrate; that span reads LS.

Belongs to the type-II 3-dehydroquinase family. Homododecamer.

It catalyses the reaction 3-dehydroquinate = 3-dehydroshikimate + H2O. The protein operates within metabolic intermediate biosynthesis; chorismate biosynthesis; chorismate from D-erythrose 4-phosphate and phosphoenolpyruvate: step 3/7. In terms of biological role, catalyzes a trans-dehydration via an enolate intermediate. The sequence is that of 3-dehydroquinate dehydratase from Clostridium botulinum (strain Langeland / NCTC 10281 / Type F).